Here is a 1114-residue protein sequence, read N- to C-terminus: Probable guanine nucleotide exchange factor MCF2L2 (1114 aa).

The 183-residue stretch at 11 to 193 folds into the CRAL-TRIO domain; the sequence is PQELTRRLAT…ELGGTLEYRH (183 aa). One copy of the Spectrin repeat lies at 323–428; it reads QHFEHDFCKA…KWDILGKSLE (106 aa). Residues 530 to 614 form a disordered region; that stretch reads QTRPVQPVAP…NPELEQQARL (85 aa). Positions 546 to 559 are enriched in polar residues; that stretch reads KWVSSKTSQPSTSV. Over residues 577 to 606 the composition is skewed to basic and acidic residues; sequence LNSRGKEDDETKFEVKSEEIFESHHERGNP. In terms of domain architecture, DH spans 619–822; that stretch reads PRRRIIRDLL…EDLIKSCELA (204 aa). The region spanning 834–954 is the PH domain; sequence DIGKLGKLLL…WFSEISKLLM (121 aa). A compositionally biased stretch (polar residues) spans 962-975; sequence DQGNPQFEMSTSKG. Residues 962-1114 are disordered; the sequence is DQGNPQFEMS…LRPRTSAQES (153 aa). The segment covering 986 to 997 has biased composition (basic and acidic residues); the sequence is NMERATTSKEDP. Acidic residues predominate over residues 1017 to 1028; the sequence is TFEDCEGAEDME. Composition is skewed to basic and acidic residues over residues 1043 to 1067 and 1074 to 1084; these read DDSH…GEKE and TATRSTEEERA.

This sequence belongs to the MCF2 family. In terms of tissue distribution, significantly expressed in brain and modestly in pancreas, brain and testis.

In terms of biological role, probably functions as a guanine nucleotide exchange factor. This Homo sapiens (Human) protein is Probable guanine nucleotide exchange factor MCF2L2 (MCF2L2).